Reading from the N-terminus, the 618-residue chain is Glucose starvation modulator protein 1 (618 aa).

The zn(2)-C6 fungal-type DNA-binding region spans 20–48; that stretch reads CEFCHTKHIQCDVGRPCQNCLKRNIGKFC. Residues 325-353 form a disordered region; the sequence is ANANTQPSHNAKLESECDSSSHSDADLEK. A compositionally biased stretch (basic and acidic residues) spans 335–353; the sequence is AKLESECDSSSHSDADLEK. A PAS domain is found at 466–538; the sequence is LLDLENMAKL…QIFNELLAFG (73 aa).

Belongs to the ERT1/acuK family.

It is found in the nucleus. Transcription factor which regulates nonfermentable carbon utilization. Binds specifically to 5'-CGGN(8)CGG-3' and 5'-CGGN(9)CGG-3' sequences in the promoter region. The polypeptide is Glucose starvation modulator protein 1 (GSM1) (Saccharomyces cerevisiae (strain JAY291) (Baker's yeast)).